The following is a 158-amino-acid chain: Small ribosomal subunit protein uS15 (158 aa).

The span at M1–G10 shows a compositional bias: basic residues. A disordered region spans residues M1–D66. Over residues D21–A32 the composition is skewed to acidic residues. Basic and acidic residues predominate over residues I33 to H45.

It belongs to the universal ribosomal protein uS15 family. Part of the 30S ribosomal subunit.

The chain is Small ribosomal subunit protein uS15 from Haloquadratum walsbyi (strain DSM 16790 / HBSQ001).